Reading from the N-terminus, the 493-residue chain is L-arabinose isomerase 1 (493 aa).

Mn(2+) contacts are provided by glutamate 301, glutamate 326, histidine 343, and histidine 442.

The protein belongs to the arabinose isomerase family. The cofactor is Mn(2+).

It carries out the reaction beta-L-arabinopyranose = L-ribulose. Its pathway is carbohydrate degradation; L-arabinose degradation via L-ribulose; D-xylulose 5-phosphate from L-arabinose (bacterial route): step 1/3. Catalyzes the conversion of L-arabinose to L-ribulose. This Bacillus licheniformis (strain ATCC 14580 / DSM 13 / JCM 2505 / CCUG 7422 / NBRC 12200 / NCIMB 9375 / NCTC 10341 / NRRL NRS-1264 / Gibson 46) protein is L-arabinose isomerase 1.